Here is a 1070-residue protein sequence, read N- to C-terminus: Ubiquitin-protein ligase E3B (1070 aa).

Residue Met1 is modified to N-acetylmethionine. Residues 29–58 (RERSAVTIQALVRSFLCRRRLHRDIRKEID) enclose the IQ domain. Position 421 is a phosphoserine (Ser421). The 367-residue stretch at 704–1070 (SQHAMKGVIR…ISMNTGFELS (367 aa)) folds into the HECT domain. The active-site Glycyl thioester intermediate is the Cys1038.

As to expression, widely expressed. High expression is observed in developing central nervous system.

The protein localises to the postsynaptic density. The catalysed reaction is S-ubiquitinyl-[E2 ubiquitin-conjugating enzyme]-L-cysteine + [acceptor protein]-L-lysine = [E2 ubiquitin-conjugating enzyme]-L-cysteine + N(6)-ubiquitinyl-[acceptor protein]-L-lysine.. It participates in protein modification; protein ubiquitination. In terms of biological role, E3 ubiquitin-protein ligase which accepts ubiquitin from an E2 ubiquitin-conjugating enzyme in the form of a thioester and then directly transfers the ubiquitin to targeted substrates. Ubiquitinates BCKDK and targets it for degradation, thereby regulating various metabolic processes. Involved in the positive regulation of neurite branching in hippocampal neurons and the control of neuronal spine number and morphology, through the ubiquitination of PPP3CC. This is Ubiquitin-protein ligase E3B (Ube3b) from Mus musculus (Mouse).